A 429-amino-acid chain; its full sequence is MSGIVEQTAVPSRVATVSLHTSPLDQPGTGDAGGMNVYVVEVARRMAERGVAVDVFTRATRADLPPVVELAPGVNVRHVPAGPYGRLDKNTLAEHLCPFIFGMLRAEAQNEPDHYDLVHGHYWLSGQAGVVAARRWGVPLVQSMHTMARVKNASLADGDEPEPEARLRGEDQLVRQADRLIANTDDEARQLREHYGARDGQISVIPPGVDLEVFSPGSRRDALARIGLPAGTELLLFVGRVQRLKAPDVLIRAAAALLERDPSLRSRLVVGVVGGLSGGGMREPGLLTDLARSLGVADVVRIEPPQTRERLADYYRAAAVTVVPSYSESFGLVAVESQACGTPVLAARVGGLTTAVADGVSGVLVRGHNPDDYAAELHRMIAEPAWRAKLAMAAPEHAATLGWSRTVDELLDVYRACTAPRALPLAACR.

A 1D-myo-inositol 3-phosphate-binding site is contributed by His-20. UDP-N-acetyl-alpha-D-glucosamine contacts are provided by residues 26–27 (QP) and Gly-34. 1D-myo-inositol 3-phosphate-binding positions include 31-36 (DAGGMN), Lys-89, Tyr-122, Thr-146, and Arg-166. Residues Arg-240, Lys-245, and Gln-306 each contribute to the UDP-N-acetyl-alpha-D-glucosamine site. Residues Tyr-315, Arg-316, and Ala-318 each coordinate Mg(2+). Positions 328 and 336 each coordinate UDP-N-acetyl-alpha-D-glucosamine. Thr-342 provides a ligand contact to Mg(2+).

It belongs to the glycosyltransferase group 1 family. MshA subfamily. In terms of assembly, homodimer.

It carries out the reaction 1D-myo-inositol 3-phosphate + UDP-N-acetyl-alpha-D-glucosamine = 1D-myo-inositol 2-acetamido-2-deoxy-alpha-D-glucopyranoside 3-phosphate + UDP + H(+). Catalyzes the transfer of a N-acetyl-glucosamine moiety to 1D-myo-inositol 3-phosphate to produce 1D-myo-inositol 2-acetamido-2-deoxy-glucopyranoside 3-phosphate in the mycothiol biosynthesis pathway. The protein is D-inositol 3-phosphate glycosyltransferase of Nocardiopsis dassonvillei (strain ATCC 23218 / DSM 43111 / CIP 107115 / JCM 7437 / KCTC 9190 / NBRC 14626 / NCTC 10488 / NRRL B-5397 / IMRU 509) (Actinomadura dassonvillei).